The following is a 133-amino-acid chain: Small ribosomal subunit protein uS9 (133 aa).

Residues 101–133 form a disordered region; sequence MKPKGLLTRDPREVERKKYGLKKARRAPQFSKR. The span at 107-118 shows a compositional bias: basic and acidic residues; it reads LTRDPREVERKK. The segment covering 119 to 133 has biased composition (basic residues); that stretch reads YGLKKARRAPQFSKR.

It belongs to the universal ribosomal protein uS9 family.

In Deinococcus radiodurans (strain ATCC 13939 / DSM 20539 / JCM 16871 / CCUG 27074 / LMG 4051 / NBRC 15346 / NCIMB 9279 / VKM B-1422 / R1), this protein is Small ribosomal subunit protein uS9.